The following is a 484-amino-acid chain: MSLSRAAIVDQLKEIVGADRVITDETVLKKNSIDRFRKFPDIHGIYTLPIPAAVVKLGSTEQVSRVLNFMNAHKINGVPRTGASATEGGLETVVENSVVLDGSAMNQIINIDIENMQATAQCGVPLEVLENALREKGYTTGHSPQSKPLAQMGGLVATRSIGQFSTLYGAIEDMVVGLEAVLADGTVTRIKNVPRRAAGPDIRHIIIGNEGALCYITEVTVKIFKFTPENNLFYGYILEDMKTGFNILREIMVEGYRPSIARLYDAEDGTQHFTHFADGKCVLIFMAEGNPRIAKATGEGIAEIVARYPQCQRVDSKLIETWFNNLNWGPDKVAAERVQILKTGNMGFTTEVSGCWSCIHEIYESVINRIRTEFPHADDITMLGGHSSHSYQNGTNMYFVYDYNVVNCKPEEEIDKYHNPLNKIICEETIRLGGSMVHHHGIGKHRVHWSKLEHGSAWALLEGLKKQFDPNGIMNTGTIYPIEK.

The FAD-binding PCMH-type domain occupies 47–226 (TLPIPAAVVK…TEVTVKIFKF (180 aa)).

Belongs to the FAD-binding oxidoreductase/transferase type 4 family.

This is an uncharacterized protein from Escherichia coli O157:H7.